Reading from the N-terminus, the 1024-residue chain is Multidrug resistance protein MdtC (1024 aa).

12 consecutive transmembrane segments (helical) span residues 12-32 (VATT…FSLL), 333-353 (EVER…FIFL), 360-380 (LIPA…MYLC), 387-407 (LSLM…IVVL), 435-455 (VLSM…MAGL), 469-489 (VAIG…CAWL), 528-548 (WVMV…ISIP), 853-873 (LWLI…LYES), 875-895 (VHPL…LLAL), 897-917 (LFDA…IGIV), 953-973 (PIIM…LSSG), and 984-1004 (ITIV…TPVI).

The protein belongs to the resistance-nodulation-cell division (RND) (TC 2.A.6) family. MdtC subfamily. Part of a tripartite efflux system composed of MdtA, MdtB and MdtC. MdtC forms a heteromultimer with MdtB.

It localises to the cell inner membrane. This chain is Multidrug resistance protein MdtC, found in Yersinia pseudotuberculosis serotype O:1b (strain IP 31758).